A 292-amino-acid polypeptide reads, in one-letter code: Ribosomal protein L11 methyltransferase (292 aa).

S-adenosyl-L-methionine contacts are provided by threonine 144, glycine 165, aspartate 187, and asparagine 229.

Belongs to the methyltransferase superfamily. PrmA family.

The protein resides in the cytoplasm. It carries out the reaction L-lysyl-[protein] + 3 S-adenosyl-L-methionine = N(6),N(6),N(6)-trimethyl-L-lysyl-[protein] + 3 S-adenosyl-L-homocysteine + 3 H(+). Methylates ribosomal protein L11. The protein is Ribosomal protein L11 methyltransferase of Pseudomonas fluorescens (strain ATCC BAA-477 / NRRL B-23932 / Pf-5).